A 422-amino-acid polypeptide reads, in one-letter code: Glucose-1-phosphate adenylyltransferase (422 aa).

Residues Y110, G175, 190–191 (EK), and S208 contribute to the alpha-D-glucose 1-phosphate site.

This sequence belongs to the bacterial/plant glucose-1-phosphate adenylyltransferase family. As to quaternary structure, homotetramer.

The catalysed reaction is alpha-D-glucose 1-phosphate + ATP + H(+) = ADP-alpha-D-glucose + diphosphate. The protein operates within glycan biosynthesis; glycogen biosynthesis. Involved in the biosynthesis of ADP-glucose, a building block required for the elongation reactions to produce glycogen. Catalyzes the reaction between ATP and alpha-D-glucose 1-phosphate (G1P) to produce pyrophosphate and ADP-Glc. The chain is Glucose-1-phosphate adenylyltransferase from Hydrogenovibrio crunogenus (strain DSM 25203 / XCL-2) (Thiomicrospira crunogena).